Consider the following 213-residue polypeptide: Probable transaldolase (213 aa).

Lysine 83 serves as the catalytic Schiff-base intermediate with substrate.

It belongs to the transaldolase family. Type 3B subfamily.

It is found in the cytoplasm. The enzyme catalyses D-sedoheptulose 7-phosphate + D-glyceraldehyde 3-phosphate = D-erythrose 4-phosphate + beta-D-fructose 6-phosphate. It participates in carbohydrate degradation; pentose phosphate pathway; D-glyceraldehyde 3-phosphate and beta-D-fructose 6-phosphate from D-ribose 5-phosphate and D-xylulose 5-phosphate (non-oxidative stage): step 2/3. Transaldolase is important for the balance of metabolites in the pentose-phosphate pathway. The chain is Probable transaldolase from Syntrophomonas wolfei subsp. wolfei (strain DSM 2245B / Goettingen).